A 70-amino-acid polypeptide reads, in one-letter code: Conotoxin Ep11.12 (70 aa).

The first 26 residues, 1-26 (MMFRVTSVGCFLLVILSLNLVVLTNA), serve as a signal peptide directing secretion. Disulfide bonds link Cys27–Cys41, Cys34–Cys46, Cys40–Cys50, and Cys45–Cys54. The residue at position 57 (Pro57) is a Proline amide. Residues 61–70 (AKLREFFRQR) constitute a propeptide that is removed on maturation.

This sequence belongs to the conotoxin I2 superfamily. Expressed by the venom duct.

It localises to the secreted. This chain is Conotoxin Ep11.12, found in Conus episcopatus (Bishop's cone).